The sequence spans 100 residues: Co-chaperonin GroES (100 aa).

It belongs to the GroES chaperonin family. In terms of assembly, heptamer of 7 subunits arranged in a ring. Interacts with the chaperonin GroEL.

The protein localises to the cytoplasm. Functionally, together with the chaperonin GroEL, plays an essential role in assisting protein folding. The GroEL-GroES system forms a nano-cage that allows encapsulation of the non-native substrate proteins and provides a physical environment optimized to promote and accelerate protein folding. GroES binds to the apical surface of the GroEL ring, thereby capping the opening of the GroEL channel. The protein is Co-chaperonin GroES of Rhodothermus marinus (Rhodothermus obamensis).